We begin with the raw amino-acid sequence, 410 residues long: BTB/POZ and MATH domain-containing protein 5 (410 aa).

The tract at residues 1-24 (MSESVIQGSNPDRVLSPTSSKSVT) is disordered. One can recognise an MATH domain in the interval 28–162 (NGSHQFVIQG…DDCLIINCTV (135 aa)). Residues 198-264 (SDITFNIAGE…MYKDSLPEDV (67 aa)) enclose the BTB domain.

The protein belongs to the Tdpoz family. In terms of assembly, heterodimer with BPM1 and BPM3. Interacts with RAP2-4. Binds to MYB56 at the promoter of FLOWERING LOCUS T (FT). As to expression, ubiquitous.

The protein localises to the nucleus. It is found in the cytoplasm. It participates in protein modification; protein ubiquitination. Functionally, may act as a substrate-specific adapter of an E3 ubiquitin-protein ligase complex (CUL3-RBX1-BTB) which mediates the ubiquitination and subsequent proteasomal degradation of target proteins. In Arabidopsis thaliana (Mouse-ear cress), this protein is BTB/POZ and MATH domain-containing protein 5 (BPM5).